We begin with the raw amino-acid sequence, 370 residues long: Cytochrome b (370 aa).

A run of 4 helical transmembrane segments spans residues 25 to 45 (FGSMLLACLTLQLLTGFFLAV), 69 to 90 (WMMQNLHAIGASMFFICIYIHI), 105 to 125 (WLSGTTLLIMLMATAFFGYVL), and 170 to 190 (FFALHFILPFGIISLSSLHIL). 2 residues coordinate heme b: histidine 75 and histidine 89. Heme b-binding residues include histidine 174 and histidine 188. Residue histidine 193 coordinates a ubiquinone. 4 consecutive transmembrane segments (helical) span residues 218–238 (YKDMLMLTIMTIMLLTIVSFF), 280–300 (LGGALALXMSIMILLTLPFTH), 312–332 (FMQLTFWTFTATFLVISWTAT), and 339–358 (FTTISQVAALMYFLFFISNP).

Belongs to the cytochrome b family. In terms of assembly, the cytochrome bc1 complex contains 3 respiratory subunits (MT-CYB, CYC1 and UQCRFS1), 2 core proteins (UQCRC1 and UQCRC2) and probably 6 low-molecular weight proteins. Heme b is required as a cofactor.

It is found in the mitochondrion inner membrane. In terms of biological role, component of the ubiquinol-cytochrome c reductase complex (complex III or cytochrome b-c1 complex) that is part of the mitochondrial respiratory chain. The b-c1 complex mediates electron transfer from ubiquinol to cytochrome c. Contributes to the generation of a proton gradient across the mitochondrial membrane that is then used for ATP synthesis. The protein is Cytochrome b (MT-CYB) of Chilabothrus exsul (Abaco Island boa).